A 209-amino-acid polypeptide reads, in one-letter code: Hydrogenase expression/formation protein HupM (209 aa).

Ni(2+)-binding residues include Glu21, Asp67, and His98.

The protein belongs to the peptidase A31 family.

In terms of biological role, not known. Could be involved in the processing of hydrogenase. This chain is Hydrogenase expression/formation protein HupM (hupM), found in Azotobacter chroococcum mcd 1.